We begin with the raw amino-acid sequence, 739 residues long: Homeobox protein SIX5 (739 aa).

3 stretches are compositionally biased toward low complexity: residues 1–24 (MATLPAEPSAGPAAGGEAVAAAAA), 34–61 (QLLQTLQAAEGEAAAAAGAGAGAAAAGA), and 74–83 (PEAASEPPTG). Disordered regions lie at residues 1 to 84 (MATL…PTGL), 251 to 294 (NRRQ…AAPV), 361 to 381 (LTGGGGAPPPQPSPQGASETK), and 617 to 650 (LSAQQPPPAAATTSSTSLPFSPDSPGLLPNFPAP). A DNA-binding region (homeobox) is located at residues 201 to 260 (GEETVYCFKERSRAALKACYRGNRYPTPDEKRRLATLTGLSLTQVSNWFKNRRQRDRTGA). The span at 279 to 289 (ESSRSPEDLER) shows a compositional bias: basic and acidic residues. Residues 617–646 (LSAQQPPPAAATTSSTSLPFSPDSPGLLPN) are compositionally biased toward low complexity.

Belongs to the SIX/Sine oculis homeobox family. As to quaternary structure, probably binds DNA dimer. Interacts with EYA3, and probably EYA1 and EYA2. Expressed in adult but not in fetal eyes. Found in corneal epithelium and endothelium, lens epithelium, ciliary body epithelia, cellular layers of the retina and the sclera.

It is found in the cytoplasm. Its subcellular location is the nucleus. In terms of biological role, transcription factor that is thought to be involved in regulation of organogenesis. May be involved in determination and maintenance of retina formation. Binds a 5'-GGTGTCAG-3' motif present in the ARE regulatory element of ATP1A1. Binds a 5'-TCA[AG][AG]TTNC-3' motif present in the MEF3 element in the myogenin promoter, and in the IGFBP5 promoter. Thought to be regulated by association with Dach and Eya proteins, and seems to be coactivated by EYA1, EYA2 and EYA3. The polypeptide is Homeobox protein SIX5 (SIX5) (Homo sapiens (Human)).